The chain runs to 506 residues: Tyrosine-protein kinase isoform SRK4 (506 aa).

Polar residues-rich tracts occupy residues 1–10 (MGSCCSSQDG) and 18–31 (AGSTVDSHELSQSV). The disordered stretch occupies residues 1–53 (MGSCCSSQDGDGNGKATAGSTVDSHELSQSVKGKIKQPEPKPKPPPQVPPAQD). Positions 54-116 (VKYPIYVGKY…PSNYVAEYKS (63 aa)) constitute an SH3 domain. The 93-residue stretch at 122–214 (WFFGQVKRVD…GLCVNLKGPC (93 aa)) folds into the SH2 domain. Positions 240–493 (IKLLRGLGAG…TLSWQLEEFF (254 aa)) constitute a Protein kinase domain. Residues 246–254 (LGAGQFGEV) and Lys268 each bind ATP. Catalysis depends on Asp359, which acts as the Proton acceptor.

It belongs to the protein kinase superfamily. Tyr protein kinase family.

It localises to the cytoplasm. It catalyses the reaction L-tyrosyl-[protein] + ATP = O-phospho-L-tyrosyl-[protein] + ADP + H(+). The polypeptide is Tyrosine-protein kinase isoform SRK4 (SRK1) (Spongilla lacustris (Freshwater sponge)).